A 356-amino-acid polypeptide reads, in one-letter code: Alanine racemase, catabolic (356 aa).

The active-site Proton acceptor; specific for D-alanine is Lys-35. N6-(pyridoxal phosphate)lysine is present on Lys-35. Residue Arg-130 participates in substrate binding. The active-site Proton acceptor; specific for L-alanine is the Tyr-253. Substrate is bound at residue Met-301.

The protein belongs to the alanine racemase family. As to quaternary structure, monomer. It depends on pyridoxal 5'-phosphate as a cofactor.

It carries out the reaction L-alanine = D-alanine. Inactivated by D- and L-beta-fluoroalanine, D- and L-beta-chloroalanine, and O-acetyl-D-serine. Functionally, isomerizes L-alanine to D-alanine which is then oxidized to pyruvate by DadA. In Salmonella typhimurium (strain LT2 / SGSC1412 / ATCC 700720), this protein is Alanine racemase, catabolic (dadX).